Consider the following 501-residue polypeptide: Cytochrome P450 2J5 (501 aa).

Cys447 is a heme binding site.

This sequence belongs to the cytochrome P450 family. Requires heme as cofactor.

The protein localises to the endoplasmic reticulum membrane. Its subcellular location is the microsome membrane. It carries out the reaction an organic molecule + reduced [NADPH--hemoprotein reductase] + O2 = an alcohol + oxidized [NADPH--hemoprotein reductase] + H2O + H(+). This is Cytochrome P450 2J5 (Cyp2j5) from Mus musculus (Mouse).